Consider the following 355-residue polypeptide: Phenylalanine--tRNA ligase alpha subunit (355 aa).

Residue glutamate 273 participates in Mg(2+) binding.

The protein belongs to the class-II aminoacyl-tRNA synthetase family. Phe-tRNA synthetase alpha subunit type 1 subfamily. In terms of assembly, tetramer of two alpha and two beta subunits. The cofactor is Mg(2+).

It localises to the cytoplasm. It catalyses the reaction tRNA(Phe) + L-phenylalanine + ATP = L-phenylalanyl-tRNA(Phe) + AMP + diphosphate + H(+). This Bifidobacterium animalis subsp. lactis (strain AD011) protein is Phenylalanine--tRNA ligase alpha subunit.